The primary structure comprises 141 residues: Nucleoside diphosphate kinase (141 aa).

ATP contacts are provided by lysine 11, phenylalanine 59, arginine 87, threonine 93, arginine 104, and asparagine 114. Histidine 117 serves as the catalytic Pros-phosphohistidine intermediate.

The protein belongs to the NDK family. In terms of assembly, homotetramer. The cofactor is Mg(2+).

It localises to the cytoplasm. It carries out the reaction a 2'-deoxyribonucleoside 5'-diphosphate + ATP = a 2'-deoxyribonucleoside 5'-triphosphate + ADP. The catalysed reaction is a ribonucleoside 5'-diphosphate + ATP = a ribonucleoside 5'-triphosphate + ADP. Its function is as follows. Major role in the synthesis of nucleoside triphosphates other than ATP. The ATP gamma phosphate is transferred to the NDP beta phosphate via a ping-pong mechanism, using a phosphorylated active-site intermediate. This chain is Nucleoside diphosphate kinase, found in Paraburkholderia xenovorans (strain LB400).